Here is a 262-residue protein sequence, read N- to C-terminus: Acyl-[acyl-carrier-protein]--UDP-N-acetylglucosamine O-acyltransferase (262 aa).

Belongs to the transferase hexapeptide repeat family. LpxA subfamily. In terms of assembly, homotrimer.

The protein resides in the cytoplasm. It carries out the reaction a (3R)-hydroxyacyl-[ACP] + UDP-N-acetyl-alpha-D-glucosamine = a UDP-3-O-[(3R)-3-hydroxyacyl]-N-acetyl-alpha-D-glucosamine + holo-[ACP]. Its pathway is glycolipid biosynthesis; lipid IV(A) biosynthesis; lipid IV(A) from (3R)-3-hydroxytetradecanoyl-[acyl-carrier-protein] and UDP-N-acetyl-alpha-D-glucosamine: step 1/6. Functionally, involved in the biosynthesis of lipid A, a phosphorylated glycolipid that anchors the lipopolysaccharide to the outer membrane of the cell. The polypeptide is Acyl-[acyl-carrier-protein]--UDP-N-acetylglucosamine O-acyltransferase (Campylobacter concisus (strain 13826)).